An 84-amino-acid polypeptide reads, in one-letter code: uncharacterized protein (84 aa).

This sequence belongs to the chlamydial CPn_0710/CT_666/TC_0037 family.

This is an uncharacterized protein from Chlamydia pneumoniae (Chlamydophila pneumoniae).